The sequence spans 417 residues: Cytoplasmic tRNA 2-thiolation protein 2 (417 aa).

The segment covering 1–11 (MCSIVEDDFGD) has biased composition (acidic residues). Residues 1–24 (MCSIVEDDFGDEGGAHAMKEDTPQ) are disordered. A compositionally biased stretch (basic and acidic residues) spans 13–22 (GGAHAMKEDT).

This sequence belongs to the CTU2/NCS2 family.

Its subcellular location is the cytoplasm. It participates in tRNA modification; 5-methoxycarbonylmethyl-2-thiouridine-tRNA biosynthesis. Functionally, plays a central role in 2-thiolation of mcm(5)S(2)U at tRNA wobble positions of tRNA(Lys), tRNA(Glu) and tRNA(Gln). May act by forming a heterodimer with NCS6/CTU1 that ligates sulfur from thiocarboxylated URM1 onto the uridine of tRNAs at wobble position. This Anopheles gambiae (African malaria mosquito) protein is Cytoplasmic tRNA 2-thiolation protein 2.